Reading from the N-terminus, the 102-residue chain is Small ribosomal subunit protein uS10 (102 aa).

This sequence belongs to the universal ribosomal protein uS10 family. Part of the 30S ribosomal subunit.

Functionally, involved in the binding of tRNA to the ribosomes. The chain is Small ribosomal subunit protein uS10 from Roseiflexus castenholzii (strain DSM 13941 / HLO8).